The following is a 531-amino-acid chain: SWI/SNF-related matrix-associated actin-dependent regulator of chromatin subfamily D member 2 (531 aa).

R81 and R104 each carry asymmetric dimethylarginine. S203 is subject to Phosphoserine. The disordered stretch occupies residues 205–227 (SKAEGDTAGTTGTPGGTPAGDKV). Position 217 is a phosphothreonine (T217). Residue K226 forms a Glycyl lysine isopeptide (Lys-Gly) (interchain with G-Cter in SUMO2) linkage. Positions 306-383 (HQPPQYKLDP…PMKLAGLLQH (78 aa)) constitute an SWIB/MDM2 domain.

This sequence belongs to the SMARCD family. Component of the multiprotein chromatin-remodeling complexes SWI/SNF: SWI/SNF-A (BAF), SWI/SNF-B (PBAF) and related complexes. The canonical complex contains a catalytic subunit (either SMARCA4/BRG1/BAF190A or SMARCA2/BRM/BAF190B), and at least SMARCE1, ACTL6A/BAF53, SMARCC1/BAF155, SMARCC2/BAF170, and SMARCB1/SNF5/BAF47. Other subunits specific to each of the complexes may also be present permitting several possible combinations developmentally and tissue specific. Component of the BAF complex, which includes at least actin (ACTB), ARID1A/BAF250A, ARID1B/BAF250B, SMARCA2/BRM, SMARCA4/BRG1, ACTL6A/BAF53, ACTL6B/BAF53B, SMARCE1/BAF57, SMARCC1/BAF155, SMARCC2/BAF170, SMARCB1/SNF5/INI1, and one or more SMARCD1/BAF60A, SMARCD2/BAF60B, or SMARCD3/BAF60C. In muscle cells, the BAF complex also contains DPF3. Component of the SWI/SNF-B (PBAF) chromatin remodeling complex, at least composed of SMARCA4/BRG1, SMARCB1/BAF47/SNF5, ACTL6A/BAF53A or ACTL6B/BAF53B, SMARCE1/BAF57, SMARCD1/BAF60A, SMARCD2/BAF60B, perhaps SMARCD3/BAF60C, SMARCC1/BAF155, SMARCC2/BAF170, PBRM1/BAF180, ARID2/BAF200 and actin (ACTB). Interacts with UNKL. Interacts with CEBPE. Post-translationally, ubiquitinated through a signaling process involving RAC1 and the RING finger protein UNKL.

The protein resides in the nucleus. Its function is as follows. Involved in transcriptional activation and repression of select genes by chromatin remodeling (alteration of DNA-nucleosome topology). Component of SWI/SNF chromatin remodeling complexes that carry out key enzymatic activities, changing chromatin structure by altering DNA-histone contacts within a nucleosome in an ATP-dependent manner. Critical regulator of myeloid differentiation, controlling granulocytopoiesis and the expression of genes involved in neutrophil granule formation. This chain is SWI/SNF-related matrix-associated actin-dependent regulator of chromatin subfamily D member 2 (SMARCD2), found in Bos taurus (Bovine).